The primary structure comprises 479 residues: MNHALRRATLGLSPGLRASRLQQSFAKHQIPAVYRCEAASTPLQRAFTTSRCFRQETAAESEKDDAARREEQSERARKRQARNVTSGSSAQTLENDRPWHRADSGADPDAPKDVPENKDMKKGRLLTTPTRLLKLILPMPFHPEQEHVNRPVEGDVDDAGATVEPLALLIHPHQPLSYLERLIQAEIPPVQYKGREKLPDIVFRAEADQNEQDGRKDDNKKKDNANVASYSGLGHEGPTNKEANWVRWSGSTEIGDFIRDAARGREFAINVEGFDRELRVAVPSFRDRTYYMRMTLRRMSRDIESMSKVKNECDTLAHQGAHRLAQGGFAALAGWWGVVYYVTFHTQAGWDLVEPVTYLAGLTTVMGAYLWFLYISRDLSYKAAMKVTVSKRQAALYQERGFDQNRWDQIIHEANNLRKEIKIIASEYDVDWDEKKDLGGEEVKKVLEEEKQGRDGTKVTEGKDEDDGPGSSDKIKKKQ.

A mitochondrion-targeting transit peptide spans 1 to 54 (MNHALRRATLGLSPGLRASRLQQSFAKHQIPAVYRCEAASTPLQRAFTTSRCFR). The Mitochondrial matrix segment spans residues 55–323 (QETAAESEKD…DTLAHQGAHR (269 aa)). Disordered stretches follow at residues 56 to 125 (ETAA…KGRL) and 206 to 238 (EADQ…HEGP). Positions 59–79 (AESEKDDAARREEQSERARKR) form a coiled coil. Residues 60–75 (ESEKDDAARREEQSER) show a composition bias toward basic and acidic residues. Positions 83 to 93 (NVTSGSSAQTL) are enriched in polar residues. Composition is skewed to basic and acidic residues over residues 94-122 (ENDR…DMKK) and 206-224 (EADQ…KKDN). The chain crosses the membrane as a helical span at residues 324-344 (LAQGGFAALAGWWGVVYYVTF). Topologically, residues 345 to 354 (HTQAGWDLVE) are mitochondrial intermembrane. Positions 350–358 (WDLVEPVTY) match the Selectivity filter motif. Glutamate 354 is a binding site for Ca(2+). The chain crosses the membrane as a helical span at residues 355 to 375 (PVTYLAGLTTVMGAYLWFLYI). Residues 376–479 (SRDLSYKAAM…GSSDKIKKKQ (104 aa)) lie on the Mitochondrial matrix side of the membrane. Residues 445–462 (KVLEEEKQGRDGTKVTEG) are compositionally biased toward basic and acidic residues. The segment at 445 to 479 (KVLEEEKQGRDGTKVTEGKDEDDGPGSSDKIKKKQ) is disordered.

It belongs to the MCU (TC 1.A.77) family. In terms of assembly, homotetramer, assembles in a dimer or dimers configuration with two interfaces.

It is found in the mitochondrion inner membrane. The catalysed reaction is Ca(2+)(in) = Ca(2+)(out). In terms of biological role, highly selective calcium channel localized to the inner mitochondrial membrane, which mediates calcium uptake into the mitochondrial matrix. Mitochondrial calcium homeostasis plays key roles in cellular physiology and regulates ATP production, cytoplasmic calcium signals and activation of cell death pathways. Sufficient to operate as a pore-forming channel without the need of calcium-sensor or auxiliary subunit. This chain is Calcium uniporter protein, mitochondrial, found in Gibberella zeae (strain ATCC MYA-4620 / CBS 123657 / FGSC 9075 / NRRL 31084 / PH-1) (Wheat head blight fungus).